We begin with the raw amino-acid sequence, 169 residues long: MSQDFVEIAKIGATYKLDGELNLYPLASSIETLLSYGDWYIQLPANSAWQPLKDESVLRRADKLYIKLASVNDVETAKKYVNSLIGVPKEALPKVGNDEAYFTDLIGCTIVNTANDSFGKVIGIIETGANEVLVCKKDSDEYLIPYVKQYIVSEDLDLKKIVVDWEYDY.

The region spanning 97 to 169 (NDEAYFTDLI…KIVVDWEYDY (73 aa)) is the PRC barrel domain.

This sequence belongs to the RimM family. Binds ribosomal protein uS19.

It is found in the cytoplasm. An accessory protein needed during the final step in the assembly of 30S ribosomal subunit, possibly for assembly of the head region. Essential for efficient processing of 16S rRNA. May be needed both before and after RbfA during the maturation of 16S rRNA. It has affinity for free ribosomal 30S subunits but not for 70S ribosomes. This chain is Ribosome maturation factor RimM, found in Francisella philomiragia subsp. philomiragia (strain ATCC 25017 / CCUG 19701 / FSC 153 / O#319-036).